The primary structure comprises 325 residues: MSDDIHGDIHLPVLLERCIELLAPALQEPGAVIVDATLGMGGHSAGILARFPQATLVGLDRDPDALAIAGERLARFGDRVHLVHTVYDGIREALDGLGIAEVQGVLFDLGVSSLQLDRVERGFSYSKDAPLDMRMDGTSDLTAERVLAEYPEADLRRIFRDYGEEKLAARYAQRIVAARQQGPITRSGELVHLLQRATPAAIARQGHPAKRVFQALRIEVNQELAVLERALPAAVDALAVGGRLVVESYQSLEDRIVKRELQTRSRSSAPAGLPVELPEHRPELRLLIRGAELADDDEKAANPRAAPVRLRAAERTRASEDRRGS.

Residues 41-43 (GGH), aspartate 60, tyrosine 87, aspartate 108, and glutamine 115 each bind S-adenosyl-L-methionine. Residues 295–325 (DDDEKAANPRAAPVRLRAAERTRASEDRRGS) form a disordered region. The span at 311–325 (RAAERTRASEDRRGS) shows a compositional bias: basic and acidic residues.

It belongs to the methyltransferase superfamily. RsmH family.

It localises to the cytoplasm. It carries out the reaction cytidine(1402) in 16S rRNA + S-adenosyl-L-methionine = N(4)-methylcytidine(1402) in 16S rRNA + S-adenosyl-L-homocysteine + H(+). Its function is as follows. Specifically methylates the N4 position of cytidine in position 1402 (C1402) of 16S rRNA. The sequence is that of Ribosomal RNA small subunit methyltransferase H from Leifsonia xyli subsp. xyli (strain CTCB07).